The following is a 368-amino-acid chain: 4-hydroxy-3-methylbut-2-en-1-yl diphosphate synthase (flavodoxin) (368 aa).

Positions 268, 271, 303, and 310 each coordinate [4Fe-4S] cluster.

It belongs to the IspG family. Requires [4Fe-4S] cluster as cofactor.

The catalysed reaction is (2E)-4-hydroxy-3-methylbut-2-enyl diphosphate + oxidized [flavodoxin] + H2O + 2 H(+) = 2-C-methyl-D-erythritol 2,4-cyclic diphosphate + reduced [flavodoxin]. It functions in the pathway isoprenoid biosynthesis; isopentenyl diphosphate biosynthesis via DXP pathway; isopentenyl diphosphate from 1-deoxy-D-xylulose 5-phosphate: step 5/6. Functionally, converts 2C-methyl-D-erythritol 2,4-cyclodiphosphate (ME-2,4cPP) into 1-hydroxy-2-methyl-2-(E)-butenyl 4-diphosphate. The sequence is that of 4-hydroxy-3-methylbut-2-en-1-yl diphosphate synthase (flavodoxin) from Bacillus cytotoxicus (strain DSM 22905 / CIP 110041 / 391-98 / NVH 391-98).